Reading from the N-terminus, the 78-residue chain is Small ribosomal subunit protein eS21 (78 aa).

The protein belongs to the eukaryotic ribosomal protein eS21 family.

This is Small ribosomal subunit protein eS21 (rps21) from Dictyostelium discoideum (Social amoeba).